The chain runs to 113 residues: Large ribosomal subunit protein bL19m (113 aa).

This sequence belongs to the bacterial ribosomal protein bL19 family.

The protein resides in the mitochondrion. The polypeptide is Large ribosomal subunit protein bL19m (RPL19) (Reclinomonas americana).